Reading from the N-terminus, the 352-residue chain is Mitochondrial ubiquitin ligase activator of NFKB 1 (352 aa).

The Cytoplasmic portion of the chain corresponds to 1–8 (MENGGRPS). The helical transmembrane segment at 9–29 (LCQFILLGTTSVVTAALYSVY) threads the bilayer. Residues 30–238 (RQKAWVSQEL…LLQRQESSVR (209 aa)) lie on the Mitochondrial intermembrane side of the membrane. Lys52 participates in a covalent cross-link: Glycyl lysine isopeptide (Lys-Gly) (interchain with G-Cter in ubiquitin). Residues 239–259 (LWKVLALVFGFATCATLFFIL) traverse the membrane as a helical segment. Residues 260 to 352 (RKQYLQRQER…ITRVIPLYNS (93 aa)) are Cytoplasmic-facing. Glycyl lysine isopeptide (Lys-Gly) (interchain with G-Cter in ubiquitin) cross-links involve residues Lys273 and Lys299. Residues 302–340 (CVVCLSSFKSCVFLECGHVCSCTECYRALPEPKKCPICR) form an RING-type zinc finger.

In terms of assembly, homooligomer. Interacts with MAP3K7/TAK1. Interacts with UBC9. Interacts with and sumoylates DNM1L. Interacts with MAVS. Interacts with TP53 (via N-terminus); the interaction leads to ubiquitination and proteasomal degradation of TP53. Post-translationally, ubiquitinated by PRKN during mitophagy, leading to its degradation and enhancement of mitophagy. Deubiquitinated by USP30.

The protein resides in the mitochondrion outer membrane. It localises to the peroxisome. It catalyses the reaction S-ubiquitinyl-[E2 ubiquitin-conjugating enzyme]-L-cysteine + [acceptor protein]-L-lysine = [E2 ubiquitin-conjugating enzyme]-L-cysteine + N(6)-ubiquitinyl-[acceptor protein]-L-lysine.. It participates in protein modification; protein ubiquitination. It functions in the pathway protein modification; protein sumoylation. Its function is as follows. Exhibits weak E3 ubiquitin-protein ligase activity. E3 ubiquitin ligases accept ubiquitin from an E2 ubiquitin-conjugating enzyme in the form of a thioester and then directly transfer the ubiquitin to targeted substrates. Can ubiquitinate AKT1 preferentially at 'Lys-284' involving 'Lys-48'-linked polyubiquitination and seems to be involved in regulation of Akt signaling by targeting phosphorylated Akt to proteasomal degradation. Mediates polyubiquitination of cytoplasmic TP53 at 'Lys-24' which targets TP53 for proteasomal degradation, thus reducing TP53 levels in the cytoplasm and mitochondrion. Proposed to preferentially act as a SUMO E3 ligase at physiological concentrations. Plays a role in the control of mitochondrial morphology by promoting mitochondrial fragmentation, and influences mitochondrial localization. Likely to promote mitochondrial fission through negatively regulating the mitochondrial fusion proteins MFN1 and MFN2, acting in a pathway that is parallel to the PRKN/PINK1 regulatory pathway. May also be involved in the sumoylation of the membrane fission protein DNM1L. Inhibits cell growth. When overexpressed, activates JNK through MAP3K7/TAK1 and induces caspase-dependent apoptosis. Involved in the modulation of innate immune defense against viruses by inhibiting RIGI-dependent antiviral response. Can mediate RIGI sumoylation and disrupt its polyubiquitination. This chain is Mitochondrial ubiquitin ligase activator of NFKB 1 (MUL1), found in Macaca fascicularis (Crab-eating macaque).